A 177-amino-acid chain; its full sequence is Acireductone dioxygenase (177 aa).

The Fe(2+) site is built by His-99, His-101, Glu-105, and His-143. 4 residues coordinate Ni(2+): His-99, His-101, Glu-105, and His-143.

This sequence belongs to the acireductone dioxygenase (ARD) family. As to quaternary structure, monomer. Fe(2+) serves as cofactor. Ni(2+) is required as a cofactor.

It carries out the reaction 1,2-dihydroxy-5-(methylsulfanyl)pent-1-en-3-one + O2 = 3-(methylsulfanyl)propanoate + CO + formate + 2 H(+). It catalyses the reaction 1,2-dihydroxy-5-(methylsulfanyl)pent-1-en-3-one + O2 = 4-methylsulfanyl-2-oxobutanoate + formate + 2 H(+). It participates in amino-acid biosynthesis; L-methionine biosynthesis via salvage pathway; L-methionine from S-methyl-5-thio-alpha-D-ribose 1-phosphate: step 5/6. Its function is as follows. Catalyzes 2 different reactions between oxygen and the acireductone 1,2-dihydroxy-3-keto-5-methylthiopentene (DHK-MTPene) depending upon the metal bound in the active site. Fe-containing acireductone dioxygenase (Fe-ARD) produces formate and 2-keto-4-methylthiobutyrate (KMTB), the alpha-ketoacid precursor of methionine in the methionine recycle pathway. Ni-containing acireductone dioxygenase (Ni-ARD) produces methylthiopropionate, carbon monoxide and formate, and does not lie on the methionine recycle pathway. This Leptospira interrogans serogroup Icterohaemorrhagiae serovar copenhageni (strain Fiocruz L1-130) protein is Acireductone dioxygenase.